A 314-amino-acid chain; its full sequence is Glycerol-1-phosphate dehydrogenase [NAD(P)+] (314 aa).

NAD(+)-binding positions include 52-56 (GKPLD) and 74-77 (TSAS). Residue D79 coordinates substrate. S83 lines the NAD(+) pocket. D131 lines the substrate pocket. Positions 131 and 211 each coordinate Zn(2+). H215 is a substrate binding site. H231 lines the Zn(2+) pocket.

The protein belongs to the glycerol-1-phosphate dehydrogenase family. It depends on Zn(2+) as a cofactor.

The protein localises to the cytoplasm. It catalyses the reaction sn-glycerol 1-phosphate + NAD(+) = dihydroxyacetone phosphate + NADH + H(+). It carries out the reaction sn-glycerol 1-phosphate + NADP(+) = dihydroxyacetone phosphate + NADPH + H(+). It functions in the pathway membrane lipid metabolism; glycerophospholipid metabolism. Its function is as follows. Catalyzes the NAD(P)H-dependent reduction of dihydroxyacetonephosphate (DHAP or glycerone phosphate) to glycerol 1-phosphate (G1P). The G1P thus generated is used as the glycerophosphate backbone of phospholipids in the cellular membranes of Archaea. The chain is Glycerol-1-phosphate dehydrogenase [NAD(P)+] from Korarchaeum cryptofilum (strain OPF8).